A 755-amino-acid polypeptide reads, in one-letter code: ABC transporter G family member 2 (755 aa).

The ABC transporter domain maps to 98 to 358 (LSFTDLTYSV…FSEFKHPIPE (261 aa)). Residue 151–158 (GASGSGKS) participates in ATP binding. In terms of domain architecture, ABC transmembrane type-2 spans 449-659 (IEMIVIGKRA…PYEGVLQNEF (211 aa)). Helical transmembrane passes span 468–488 (LLGMRLGAVMVTGIILATMFT), 503–523 (FFAFAMSTTFYTCAEAIPVFL), 552–572 (IPALIVLSASFAATTFWAVGL), 579–599 (FFFFYFTILASFWAGSSFVTF), 609–629 (LGFTVVVAILAYFLLFSGFFI), and 728–748 (LWITVAWGFFFRVLFYFTLLI).

The protein belongs to the ABC transporter superfamily. ABCG family. Eye pigment precursor importer (TC 3.A.1.204) subfamily.

The protein resides in the membrane. The protein is ABC transporter G family member 2 (ABCG2) of Arabidopsis thaliana (Mouse-ear cress).